Consider the following 418-residue polypeptide: MSRPDDIDVRPIAEAETADWIRALNTGFLRSPEVSEREVADRSSYLVPARTLGAFDNGRCVATFRSFPQELTAVGGASVPADAISNVTVTATHRRRGLLTRMMAQDLAAAKERGDVVATLIAAEYPIYGRYGFGAATHSTEWTIDVPRTGLDPRWSGPGDGGRIDLVDGEDVRKAGPELHERLRRTQPGAVSRDERWWQVHTGVVRLDRSPWTEPFYAVYRSASGEVEGLVSYECDDHWGDAKQPQNTAKVNWLIATTPAAERALWHYLCSIDWITKVRTGWRAPDDLLPHFLPDPRAARVTTHADWLWVRILDVVRALEARTYDGSGTLVLDVVDRHGLAGGRYRLTVGPDGAVCEPTTRDAGLTLDVGELAALWLGDASAVRLAALGRVREQQEGAASVADALLRTSGRPWCPDMF.

Residues 7-158 form the N-acetyltransferase domain; that stretch reads IDVRPIAEAE…TGLDPRWSGP (152 aa). Acetyl-CoA contacts are provided by residues 87-89 and 95-100; these read VTV and RRGLLT. Tyr-128 functions as the Proton donor in the catalytic mechanism. Phe-418 acts as the Proton acceptor; via carboxylate in catalysis.

Belongs to the acetyltransferase Eis family. In terms of assembly, homohexamer; trimer of dimers.

This is an uncharacterized protein from Streptomyces avermitilis (strain ATCC 31267 / DSM 46492 / JCM 5070 / NBRC 14893 / NCIMB 12804 / NRRL 8165 / MA-4680).